The following is a 173-amino-acid chain: Photosystem I assembly protein Ycf3 (173 aa).

TPR repeat units lie at residues 35–68, 72–105, and 113–146; these read AFAY…EEDP, SYIL…NPRM, and AVIY…WKRA.

It belongs to the Ycf3 family.

The protein localises to the cellular thylakoid membrane. Functionally, essential for the assembly of the photosystem I (PSI) complex. May act as a chaperone-like factor to guide the assembly of the PSI subunits. This is Photosystem I assembly protein Ycf3 from Thermosynechococcus vestitus (strain NIES-2133 / IAM M-273 / BP-1).